Consider the following 465-residue polypeptide: Argininosuccinate lyase (465 aa).

It belongs to the lyase 1 family. Argininosuccinate lyase subfamily.

The protein resides in the cytoplasm. It carries out the reaction 2-(N(omega)-L-arginino)succinate = fumarate + L-arginine. It functions in the pathway amino-acid biosynthesis; L-arginine biosynthesis; L-arginine from L-ornithine and carbamoyl phosphate: step 3/3. This is Argininosuccinate lyase from Rhodopseudomonas palustris (strain HaA2).